Here is a 113-residue protein sequence, read N- to C-terminus: Prefoldin subunit beta (113 aa).

This sequence belongs to the prefoldin subunit beta family. As to quaternary structure, heterohexamer of two alpha and four beta subunits.

Its subcellular location is the cytoplasm. In terms of biological role, molecular chaperone capable of stabilizing a range of proteins. Seems to fulfill an ATP-independent, HSP70-like function in archaeal de novo protein folding. This is Prefoldin subunit beta from Methanococcus maripaludis (strain DSM 14266 / JCM 13030 / NBRC 101832 / S2 / LL).